A 632-amino-acid polypeptide reads, in one-letter code: 1-deoxy-D-xylulose-5-phosphate synthase (632 aa).

Thiamine diphosphate contacts are provided by residues His79 and 120 to 122 (GHA). Residue Asp151 coordinates Mg(2+). Thiamine diphosphate contacts are provided by residues 152-153 (GS), Asn180, Phe292, and Glu376. Asn180 serves as a coordination point for Mg(2+).

Belongs to the transketolase family. DXPS subfamily. In terms of assembly, homodimer. Requires Mg(2+) as cofactor. The cofactor is thiamine diphosphate.

The enzyme catalyses D-glyceraldehyde 3-phosphate + pyruvate + H(+) = 1-deoxy-D-xylulose 5-phosphate + CO2. The protein operates within metabolic intermediate biosynthesis; 1-deoxy-D-xylulose 5-phosphate biosynthesis; 1-deoxy-D-xylulose 5-phosphate from D-glyceraldehyde 3-phosphate and pyruvate: step 1/1. Its function is as follows. Catalyzes the acyloin condensation reaction between C atoms 2 and 3 of pyruvate and glyceraldehyde 3-phosphate to yield 1-deoxy-D-xylulose-5-phosphate (DXP). This Azobacteroides pseudotrichonymphae genomovar. CFP2 protein is 1-deoxy-D-xylulose-5-phosphate synthase.